The chain runs to 379 residues: Transcription factor bHLH122 (379 aa).

The span at 1 to 17 shows a compositional bias: basic and acidic residues; the sequence is MESEFQQHHFLLHDHQH. The segment at 1-21 is disordered; it reads MESEFQQHHFLLHDHQHQRPR. The residue at position 74 (Ser74) is a Phosphoserine. 3 disordered regions span residues 79-98, 133-156, and 190-286; these read TFNS…EDED, SVSR…ARHN, and TSNT…MSLP. The segment covering 84-93 has biased composition (basic and acidic residues); sequence GTEKKPPEVK. Residues 190–200 are compositionally biased toward polar residues; it reads TSNTEASSLTP. Phosphoserine occurs at positions 213 and 234. Over residues 235-261 the composition is skewed to polar residues; the sequence is GGFNRSFGNEGSASSKLTALARTQSGG. Positions 265 to 274 are enriched in basic and acidic residues; the sequence is YKTKDEDSAS. The bHLH domain maps to 310–360; it reads CATHPRSIAERVRRTKISERMRKLQDLVPNMDTQTNTADMLDLAVQYIKDL.

Homodimer.

It localises to the nucleus. This is Transcription factor bHLH122 (BHLH122) from Arabidopsis thaliana (Mouse-ear cress).